The chain runs to 1287 residues: Vacuolating cytotoxin autotransporter (1287 aa).

Positions 1–33 (MEIQQTHRKINRPLVSLALVGALVSITPQQSHA) are cleaved as a signal peptide. Positions 326–381 (PPEGGYKDKPNNTPSQSGAKNDKQESSQNNSNTQVINPPNSTQKTEVQPTQVIDGP) are disordered. Over residues 351-376 (SSQNNSNTQVINPPNSTQKTEVQPTQ) the composition is skewed to polar residues. Residues 1014–1287 (KYEKPTNVWA…ASNLGMRYSF (274 aa)) form the Autotransporter domain.

It is found in the periplasm. Its subcellular location is the secreted. It localises to the cell surface. The protein resides in the cell outer membrane. In terms of biological role, induces vacuolation of eukaryotic cells. Causes ulceration and gastric lesions. The sequence is that of Vacuolating cytotoxin autotransporter (vacA) from Helicobacter pylori (Campylobacter pylori).